Reading from the N-terminus, the 418-residue chain is UDP-N-acetylglucosamine 1-carboxyvinyltransferase (418 aa).

Residue 22-23 coordinates phosphoenolpyruvate; sequence KN. A UDP-N-acetyl-alpha-D-glucosamine-binding site is contributed by Arg-91. The Proton donor role is filled by Cys-115. Cys-115 bears the 2-(S-cysteinyl)pyruvic acid O-phosphothioketal mark. Residues Asp-303 and Ile-325 each coordinate UDP-N-acetyl-alpha-D-glucosamine.

This sequence belongs to the EPSP synthase family. MurA subfamily.

The protein localises to the cytoplasm. The enzyme catalyses phosphoenolpyruvate + UDP-N-acetyl-alpha-D-glucosamine = UDP-N-acetyl-3-O-(1-carboxyvinyl)-alpha-D-glucosamine + phosphate. The protein operates within cell wall biogenesis; peptidoglycan biosynthesis. In terms of biological role, cell wall formation. Adds enolpyruvyl to UDP-N-acetylglucosamine. The polypeptide is UDP-N-acetylglucosamine 1-carboxyvinyltransferase (Syntrophobacter fumaroxidans (strain DSM 10017 / MPOB)).